The sequence spans 467 residues: Thiohydroximate-O-sulfate sulfur/sulfate-lyase (nitrile-forming) NSP3 (467 aa).

A Jacalin-type lectin domain is found at 2 to 143; that stretch reads AQKLVAQGGE…LHSLGAYVSL (142 aa). Kelch repeat units follow at residues 177–225, 230–276, 280–329, 331–375, and 379–434; these read KIYS…VRMV, TLYT…SMAA, NVYV…VVQG, VWIV…ASAA, and HIVI…ASTT. The active-site Proton donor is the Arg237. A (Z)-N-(sulfonatooxy)alkanimidothioate is bound by residues Arg237, Ser270, Arg292, Gly321, and Val370. Residue Arg292 is the Proton donor of the active site. Residues Glu386, Asp390, and His394 each coordinate Fe(2+). Trp429 serves as a coordination point for a (Z)-N-(sulfonatooxy)alkanimidothioate.

It belongs to the jacalin lectin family. Requires Fe(2+) as cofactor. In terms of tissue distribution, mainly expressed in roots, and, at low levels, in seedlings and leaves. Observed in seeds.

It carries out the reaction a (Z)-N-(sulfonatooxy)alkanimidothioate = a nitrile + sulfur + sulfate. The enzyme catalyses (Z)-phenyl-N-(sulfonatooxy)methanimidothioate = phenylacetonitrile + sulfur + sulfate. It catalyses the reaction (Z)-N-(sulfonatooxy)prop-2-enimidothioate = but-3-enenitrile + sulfur + sulfate. Specifier protein responsible for constitutive and herbivore-induced simple nitrile formation, especially in roots. Promotes simple nitriles, but not epithionitrile or thiocyanate formation. Converts allylglucosinolate and benzylglucosinolate (glucotropaeolin) to their corresponding simple nitriles in the presence of myrosinase. In Arabidopsis thaliana (Mouse-ear cress), this protein is Thiohydroximate-O-sulfate sulfur/sulfate-lyase (nitrile-forming) NSP3.